A 254-amino-acid chain; its full sequence is Triosephosphate isomerase (254 aa).

Substrate is bound at residue 9-11; sequence NWK. Residue His-96 is the Electrophile of the active site. The Proton acceptor role is filled by Glu-169. Substrate is bound by residues Gly-175, Ser-215, and 236–237; that span reads GG.

The protein belongs to the triosephosphate isomerase family. In terms of assembly, homodimer.

The protein resides in the cytoplasm. It carries out the reaction D-glyceraldehyde 3-phosphate = dihydroxyacetone phosphate. It functions in the pathway carbohydrate biosynthesis; gluconeogenesis. The protein operates within carbohydrate degradation; glycolysis; D-glyceraldehyde 3-phosphate from glycerone phosphate: step 1/1. In terms of biological role, involved in the gluconeogenesis. Catalyzes stereospecifically the conversion of dihydroxyacetone phosphate (DHAP) to D-glyceraldehyde-3-phosphate (G3P). The chain is Triosephosphate isomerase from Borrelia hermsii (strain HS1 / DAH).